The primary structure comprises 408 residues: GTPase Obg (408 aa).

An Obg domain is found at 1 to 159 (MKFVDEVSIR…RDLKMEMKVL (159 aa)). The segment at 127–148 (NTRFKSSTNRAPRQTTPGKPGE) is disordered. Residues 129–143 (RFKSSTNRAPRQTTP) are compositionally biased toward polar residues. The 174-residue stretch at 160 to 333 (ADVGLLGLPN…LSHDLMRYLE (174 aa)) folds into the OBG-type G domain. GTP-binding positions include 166-173 (GLPNAGKS), 191-195 (FTTLV), 213-216 (DIPG), 283-286 (NKAD), and 314-316 (SAI). Mg(2+) contacts are provided by serine 173 and threonine 193. The segment covering 385-401 (GDDDGWDDDFEDDEDGP) has biased composition (acidic residues). A disordered region spans residues 385-408 (GDDDGWDDDFEDDEDGPEIIYVRD).

The protein belongs to the TRAFAC class OBG-HflX-like GTPase superfamily. OBG GTPase family. As to quaternary structure, monomer. Mg(2+) is required as a cofactor.

It localises to the cytoplasm. An essential GTPase which binds GTP, GDP and possibly (p)ppGpp with moderate affinity, with high nucleotide exchange rates and a fairly low GTP hydrolysis rate. Plays a role in control of the cell cycle, stress response, ribosome biogenesis and in those bacteria that undergo differentiation, in morphogenesis control. This chain is GTPase Obg, found in Pseudomonas putida (strain ATCC 700007 / DSM 6899 / JCM 31910 / BCRC 17059 / LMG 24140 / F1).